An 898-amino-acid polypeptide reads, in one-letter code: Neutral alpha-glucosidase C (898 aa).

The tract at residues 154-173 (QRATKGNGQNTPAATSQENQ) is disordered. Positions 157–171 (TKGNGQNTPAATSQE) are enriched in polar residues. D495 acts as the Nucleophile in catalysis. The active site involves E498. The active-site Proton donor is D571.

This sequence belongs to the glycosyl hydrolase 31 family.

It carries out the reaction Hydrolysis of terminal, non-reducing (1-&gt;4)-linked alpha-D-glucose residues with release of alpha-D-glucose.. In terms of biological role, has alpha-glucosidase activity. In Mus musculus (Mouse), this protein is Neutral alpha-glucosidase C (Ganc).